Here is a 233-residue protein sequence, read N- to C-terminus: Large ribosomal subunit protein uL3 (233 aa).

Residues 145-172 (FGSQRASHGNSRSHRVPGSIGQAQDPGR) form a disordered region. Position 168 is an N5-methylglutamine (glutamine 168).

It belongs to the universal ribosomal protein uL3 family. In terms of assembly, part of the 50S ribosomal subunit. Forms a cluster with proteins L14 and L19. In terms of processing, methylated by PrmB.

In terms of biological role, one of the primary rRNA binding proteins, it binds directly near the 3'-end of the 23S rRNA, where it nucleates assembly of the 50S subunit. The protein is Large ribosomal subunit protein uL3 of Bordetella petrii (strain ATCC BAA-461 / DSM 12804 / CCUG 43448).